The primary structure comprises 56 residues: Large ribosomal subunit protein uL30 (56 aa).

This sequence belongs to the universal ribosomal protein uL30 family. As to quaternary structure, part of the 50S ribosomal subunit.

This Oleidesulfovibrio alaskensis (strain ATCC BAA-1058 / DSM 17464 / G20) (Desulfovibrio alaskensis) protein is Large ribosomal subunit protein uL30.